The primary structure comprises 65 residues: Large ribosomal subunit protein uL30 (65 aa).

It belongs to the universal ribosomal protein uL30 family. As to quaternary structure, part of the 50S ribosomal subunit.

This chain is Large ribosomal subunit protein uL30, found in Mycobacterium bovis (strain ATCC BAA-935 / AF2122/97).